Reading from the N-terminus, the 1437-residue chain is MASSSTETQLQRIIRDLQDAATELSHEFKEGGEPITDDSTSLHKFSYKLEYLLQFDQKEKASLLGSKKDYWDYFCACLAKVKGANDGIRFVRSISELRTSLGKGRAFIRYSLVHQRLADTLQQCFMNTKVTSDWYYARSPFLKPKLSSDIVGQLYELTEVQFDLAPRGYDLDAAWPTFARRTLATSTSAYMWKPPSRSSSMSSLVSNYLQTQEMASSLDLNCSLNNEALESFDEMRLELDQLEVREKQLQERVQQLDRENQALRMLVSRQGGQLQVEKEMGYLAVEDSIGLVSLVAELQKQGDVSQATVKKLQSCLQALELNVDKKEYSPSALQLENMAKELDTVRGSLGRENQLLASLSERLARAEKGEKTPPDTELHQEPVPADLVLKFQELKGKLQALEGENTEAQELNRQQSIKLEQLAKELQLKEEARASLAHLVKDVVPLQEELSGKKQESAQLRRQLQESLAHLSSVEEELAEARQQEKQHREEKQLLEQEATSLTWQLQLLETQLGQVSQLVSDLEEQKKQLMQERDHLSQRVGTLEQLAEVHGPPQSAEMPEKRQQCLREEQVNNSTVSEAEQEELQKELQNMVDRNQLLEGKLQALQTDYKALQQREAAIQGSLASLEAEQASIRHLGNQMEASLLAVKKAKETMKAQVAEKEAALQSKESECQRLQEEADQCRLQAEAQAQELRALENQCQQQIQLIEVLSAEKGQQGLSLPQVNTDQLALSQAQLEIHQGEAQRLQNEVVDLQAKLQVALGDRDKLQSQLGVAETVLREHKTLVQQLKEQNEALNRAHVQELLQCSEREGILQEESIYKAQKQEQELRALQAELSQVRCSSEGAHLEHAELQDQLHRANTDTAELGIQVCALTAEKDRMEEALASLAQELQDSKEAALQERKGLELQVMQLQQEKEKLQEKVKAAEEAASSFSGLQAQLAQAEQLAQSLQETAHQEQDALKFQLSAEIMDHQNRLKTANEECGHLRAQLEEQGQQLQMTKEAVQELEITKAAMEEKLNCTSSHLAECQATLLRKDEESTMLQTSLERTQKELEKATSKIQEYYNKLCQEVTNRERNDQKMLADLDDLNRTKKYLEERLIELLRDKDALWQKSDALEFQQKLSAEEKCLGDMEVNHCHDCKREFSWIVRRHHCRICGRIFCYYCCNNYVVTKPSGKKERCCRACFQKFGEGSGSNDSSGSGTSQGEPSPMVSPAEASPQSIGSQGINSVCRPPDDAVFDIITDEELCQIQESGSSLPETPTETDSMDPNTAEQDTTSNSLTPEDTEDVPMGQDAEICLLKSGELMIKLPLTVEEVASFGEGSRELFVRSSTYSLITITVAEPGLTISWVFSSDPKSISFSVVFQETEDTPLDQCKVLIPTTRCNSHKENIRGQLKVRIPGIYLLIFDNTFSRFISKKVLYHLTVDRPVIYDGSDFP.

At Ala-2 the chain carries N-acetylalanine. Positions 4 to 30 (SSTETQLQRIIRDLQDAATELSHEFKE) form a coiled coil. In terms of domain architecture, RUN spans 36 to 169 (TDDSTSLHKF…VQFDLAPRGY (134 aa)). Ser-196 carries the post-translational modification Phosphoserine. Coiled coils occupy residues 223-270 (SLNN…VSRQ), 305-846 (SQAT…SEGA), and 873-1110 (ALTA…KDAL). The residue at position 372 (Thr-372) is a Phosphothreonine. Position 837 is a phosphoserine (Ser-837). The segment at 1132 to 1190 (DMEVNHCHDCKREFSWIVRRHHCRICGRIFCYYCCNNYVVTKPSGKKERCCRACFQKFG) adopts an FYVE-type zinc-finger fold. The Zn(2+) site is built by Cys-1138, Cys-1141, Cys-1154, Cys-1157, Cys-1162, Cys-1165, Cys-1182, and Cys-1185. 2 disordered regions span residues 1191 to 1227 (EGSGSNDSSGSGTSQGEPSPMVSPAEASPQSIGSQGI) and 1253 to 1289 (SGSSLPETPTETDSMDPNTAEQDTTSNSLTPEDTEDV). Low complexity predominate over residues 1194–1206 (GSNDSSGSGTSQG). Polar residues-rich tracts occupy residues 1218–1227 (SPQSIGSQGI) and 1253–1283 (SGSSLPETPTETDSMDPNTAEQDTTSNSLTP). The region spanning 1296-1425 (EICLLKSGEL…SKKVLYHLTV (130 aa)) is the GOLD domain.

In terms of assembly, can form homodimers. Interacts (via C-terminus) with MAP1LC3B. Interacts with RAB7A; the interaction with RAB7A induces FYCO1 recruitment to late endosomal/lysosomal compartments. Expressed in heart and testis. Expressed in the eye lens.

The protein localises to the cytoplasmic vesicle. Its subcellular location is the autophagosome. The protein resides in the endosome. It is found in the lysosome. May mediate microtubule plus end-directed vesicle transport. The sequence is that of FYVE and coiled-coil domain-containing protein 1 (Fyco1) from Mus musculus (Mouse).